The following is a 657-amino-acid chain: Protein PSK SIMULATOR 1 (657 aa).

Polar residues-rich tracts occupy residues 1–15 (MGGL…NNAP), 26–39 (HLNN…SHSG), 62–76 (ESFS…SHPQ), and 540–556 (RSPN…SHNP). Disordered stretches follow at residues 1–80 (MGGL…NIED) and 534–559 (PVKS…PSMG). The N-myristoyl glycine moiety is linked to residue Gly-2.

It localises to the nucleus. Functionally, promotes seedling growth probably via the regulation of phytosulfokine (PSK) signaling; PSK are peptide phytohormones acting as growth factors. Together with PSI2 and PSI3, required during vegetative growth and reproduction. May also have a function in carbohydrate metabolism. This is Protein PSK SIMULATOR 1 from Arabidopsis thaliana (Mouse-ear cress).